We begin with the raw amino-acid sequence, 389 residues long: Basigin (389 aa).

The first 21 residues, 1-21 (MAAALLLALAFTLLSGQGACA), serve as a signal peptide directing secretion. The Extracellular portion of the chain corresponds to 22 to 325 (AAGFLKAPLS…ETISLRVRSR (304 aa)). Residues 37-120 (GGSVVLHCEA…SSDPDRNHLT (84 aa)) enclose the Ig-like domain. 3 cysteine pairs are disulfide-bonded: C44-C108, C157-C203, and C242-C305. One can recognise an Ig-like C2-type domain in the interval 138–219 (EPGTIQTSVQ…VGRSEINVEG (82 aa)). Residues N160, N270, and N306 are each glycosylated (N-linked (GlcNAc...) asparagine). One can recognise an Ig-like V-type domain in the interval 221–319 (PRIKVGKKSE…AQGTTRETIS (99 aa)). Residues 326-349 (MAALWPFLGIVAEVLVLVTIIFIY) form a helical membrane-spanning segment. Over 350-389 (EKRRKPDQTLDEDDPGAAPLKGSGTHMNDKDKNVRQRNAT) the chain is Cytoplasmic. The interval 356–389 (DQTLDEDDPGAAPLKGSGTHMNDKDKNVRQRNAT) is disordered. T358 bears the Phosphothreonine mark. S372 carries the phosphoserine modification.

As to quaternary structure, interacts with NXNL1. Interacts with SLC2A1 and SLC16A1/GLUT1. Interacts with XKR8; promoting its localization at the cell membrane. Interacts with ATP1B2, MAG and L1CAM. Interacts with SLC16A7. Interacts with VEGFA, KDR/VEGFR2, PPIA/CYPA, SLC1A3, SLC16A11 and SLC16A12. Interacts with PPIL2; regulates BSG transport to the cell membrane. Interacts with SLC16A1; interaction mediates SLC16A1 targeting to the plasma membrane. Interacts with SLC16A3; interaction mediates SLC16A3 targeting to the plasma membrane. In terms of assembly, interacts with SLC16A6; this interaction mediates targeting to the plasma membrane. In terms of processing, N-glycosylated. Post-translationally, N-glycosylated. During spermatogenesis, probably deglycosylated during epididymal transit. Retina-specific. Expressed in both rods and cones (at protein level). In terms of tissue distribution, testis and caput, corpus and cauda epididymides (at protein level). Expressed in the brain, lung, liver, kidney, heart, spleen, uterus, retina and skeletal muscle.

It localises to the cell membrane. Its subcellular location is the photoreceptor inner segment. It is found in the cell projection. The protein localises to the cilium. The protein resides in the photoreceptor outer segment. It localises to the endoplasmic reticulum membrane. Its subcellular location is the basolateral cell membrane. Its function is as follows. Essential for normal retinal maturation and development. Acts as a retinal cell surface receptor for NXNL1 and plays an important role in NXNL1-mediated survival of retinal cone photoreceptors. In association with glucose transporter SLC16A1/GLUT1 and NXNL1, promotes retinal cone survival by enhancing aerobic glycolysis and accelerating the entry of glucose into photoreceptors. In terms of biological role, signaling receptor for cyclophilins, essential for PPIA/CYPA and PPIB/CYPB-dependent signaling related to chemotaxis and adhesion of immune cells. Plays an important role in targeting the monocarboxylate transporters SLC16A1, SLC16A3 and SLC16A8 to the plasma membrane. Acts as a coreceptor for vascular endothelial growth factor receptor 2 (KDR/VEGFR2) in endothelial cells enhancing its VEGFA-mediated activation and downstream signaling. Promotes angiogenesis through EPAS1/HIF2A-mediated up-regulation of VEGFA and KDR/VEGFR2 in endothelial cells. Plays an important role in spermatogenesis; mediates interactions between germ cells and Sertoli cell and is essential for the development/differentiation of germ cells to round spermatids. The protein is Basigin (Bsg) of Mus musculus (Mouse).